The chain runs to 389 residues: Mannitol-1-phosphate 5-dehydrogenase (389 aa).

5 to 16 (AIQFGGGNIGRG) is an NAD(+) binding site. The active site involves lysine 214.

Belongs to the mannitol dehydrogenase family. Monomer.

The enzyme catalyses D-mannitol 1-phosphate + NAD(+) = beta-D-fructose 6-phosphate + NADH + H(+). Functionally, catalyzes the NAD(H)-dependent interconversion of D-fructose 6-phosphate and D-mannitol 1-phosphate in the mannitol metabolic pathway. The sequence is that of Mannitol-1-phosphate 5-dehydrogenase from Talaromyces marneffei (strain ATCC 18224 / CBS 334.59 / QM 7333) (Penicillium marneffei).